A 1062-amino-acid chain; its full sequence is Cell division control protein 7 (1062 aa).

The 251-residue stretch at 9 to 259 folds into the Protein kinase domain; sequence ITLGDCLGKG…TRKLLKHPWV (251 aa). Residues 15–23 and Lys38 contribute to the ATP site; that span reads LGKGAFGAV. Asp131 (proton acceptor) is an active-site residue. Polar residues-rich tracts occupy residues 296-310 and 376-394; these read NRIN…QSSY and AFNS…SPLS. 3 disordered regions span residues 296–331, 361–394, and 1038–1062; these read NRIN…NWDN, NNSS…SPLS, and NEHK…PLTQ.

This sequence belongs to the protein kinase superfamily. Ser/Thr protein kinase family. CDC7 subfamily. Interacts with spg1. Seems to interact with cdc11. It depends on Mg(2+) as a cofactor.

The enzyme catalyses L-seryl-[protein] + ATP = O-phospho-L-seryl-[protein] + ADP + H(+). It catalyses the reaction L-threonyl-[protein] + ATP = O-phospho-L-threonyl-[protein] + ADP + H(+). Functionally, protein kinase essential for cell division. Plays a key role in initiation of septum formation and cytokinesis. This is Cell division control protein 7 (cdc7) from Schizosaccharomyces pombe (strain 972 / ATCC 24843) (Fission yeast).